The following is a 1131-amino-acid chain: Topless-related protein 2 (1131 aa).

The LisH domain maps to 4–36 (LSRELVFLILQFLDEEKFKESVHKLEQESGFFF). The 59-residue stretch at 34-92 (FFFNIKYFEEKALAGEWDEVEKYLSGFTKVDDNRYSMKIFFEIRKQKYLEALDRNDRAK) folds into the CTLH domain. Residue Thr-214 is modified to Phosphothreonine. WD repeat units lie at residues 345–385 (RQGS…KVVT), 407–446 (EPSI…LRQH), 451–493 (AHVG…FTFE), 495–535 (HEAP…SRVD), 585–624 (FRKK…LLTV), 629–668 (GGLP…RTLR), 763–802 (DSVS…QNPT), 829–867 (NPEG…VMTT), 870–910 (PPPP…VKTK), 913–952 (GHQK…KKKS), 959–999 (PGKA…CIHK), and 1005–1044 (ALSS…LRCR). The segment at 1099 to 1131 (VGVAAGSDKAGTENGRPSSSSAANNSSSDQIQR) is disordered. Over residues 1116 to 1131 (SSSSAANNSSSDQIQR) the composition is skewed to low complexity.

In terms of assembly, tetramer. Interacts with NINJA/AFPH2. Interacts with SMXL6, SMXL7 and SMXL8. Interacts with SPL (via EAR motif). Interacts with SPEAR3/TIE1.

The protein localises to the nucleus. Its function is as follows. Transcriptional corepressor. Negative regulator of jasmonate responses. In Arabidopsis thaliana (Mouse-ear cress), this protein is Topless-related protein 2 (TPR2).